Here is a 1473-residue protein sequence, read N- to C-terminus: Ovostatin (1473 aa).

An N-terminal signal peptide occupies residues M1–G36. N-linked (GlcNAc...) asparagine glycosylation is found at N67, N82, N89, N191, N342, N403, N527, N588, N757, N1141, N1221, N1315, and N1347.

Belongs to the protease inhibitor I39 (alpha-2-macroglobulin) family. In terms of assembly, homotetramer, which consists of two pairs of disulfide-linked chains. In terms of processing, lacks the thioester bond found in other members of this family. Glycosylated; contains 56 glucosamine units per subunit.

Its subcellular location is the secreted. Is able to inhibit all four classes of proteinases by a unique 'trapping' mechanism. This protein has a peptide stretch, called the 'bait region' which contains specific cleavage sites for different proteinases. When a proteinase cleaves the bait region, a conformational change is induced in the protein which traps the proteinase. The entrapped enzyme remains active against low molecular weight substrates (activity against high molecular weight substrates is greatly reduced). This chain is Ovostatin, found in Gallus gallus (Chicken).